The following is a 675-amino-acid chain: DNA ligase (675 aa).

Residues 36–40 (DAAYD), 85–86 (SL), and Glu117 each bind NAD(+). Lys119 serves as the catalytic N6-AMP-lysine intermediate. The NAD(+) site is built by Arg140, Glu177, Lys294, and Lys318. Cys412, Cys415, Cys430, and Cys436 together coordinate Zn(2+). The BRCT domain occupies 597–675 (AEDLPLSGNT…EAEFLELIGE (79 aa)).

Belongs to the NAD-dependent DNA ligase family. LigA subfamily. The cofactor is Mg(2+). Requires Mn(2+) as cofactor.

The enzyme catalyses NAD(+) + (deoxyribonucleotide)n-3'-hydroxyl + 5'-phospho-(deoxyribonucleotide)m = (deoxyribonucleotide)n+m + AMP + beta-nicotinamide D-nucleotide.. In terms of biological role, DNA ligase that catalyzes the formation of phosphodiester linkages between 5'-phosphoryl and 3'-hydroxyl groups in double-stranded DNA using NAD as a coenzyme and as the energy source for the reaction. It is essential for DNA replication and repair of damaged DNA. In Thioalkalivibrio sulfidiphilus (strain HL-EbGR7), this protein is DNA ligase.